The sequence spans 109 residues: Small ribosomal subunit protein bS18c (109 aa).

The disordered stretch occupies residues 82-109 (GFERSESTPRTNALKPRNKNKQNNQTQF).

Belongs to the bacterial ribosomal protein bS18 family. Part of the 30S ribosomal subunit.

Its subcellular location is the plastid. This is Small ribosomal subunit protein bS18c from Cuscuta reflexa (Southern Asian dodder).